The following is a 186-amino-acid chain: MKIKEIIVVEGRDDTARIKLAVDADTIETNGSAIDDHVIDQIRLAQKTRGVIILTDPDFPGEKIRKTISEAVPGCKHAFLPKHLAKPKNKRGIGVEHASVESIRACLENVHEEMEAQPSDISAEDLIHAGLIGGPAAKCRRERLGDLLKIGYTNGKQLQKRLQMFQIKKSDFMSALDTVMREEQNE.

The 91-residue stretch at 4–94 (KEIIVVEGRD…AKPKNKRGIG (91 aa)) folds into the Toprim domain. Glu-10, Asp-56, and Asp-58 together coordinate Mg(2+).

This sequence belongs to the ribonuclease M5 family. Requires ribosomal protein L18 (rplR) for catalysis; it can be replaced by 30% dimethylsulfoxide suggesting L18 functions as an rRNA folding chaperone. The cofactor is Mg(2+). Requires Mn(2+) as cofactor. Ca(2+) serves as cofactor.

The protein localises to the cytoplasm. The enzyme catalyses Endonucleolytic cleavage of RNA, removing 21 and 42 nucleotides, respectively, from the 5'- and 3'-termini of a 5S-rRNA precursor.. Functionally, required for correct processing of both the 5' and 3' ends of 5S rRNA precursor. Cleaves both sides of a double-stranded region yielding mature 5S rRNA in one step. Releases 5'-phosphoryl and 3'-hydroxy termini. The polypeptide is Ribonuclease M5 (Bacillus subtilis (strain 168)).